The primary structure comprises 176 residues: Crossover junction endodeoxyribonuclease RuvC (176 aa).

Active-site residues include Asp10, Glu69, and Asp141. Residues Asp10, Glu69, and Asp141 each contribute to the Mg(2+) site.

It belongs to the RuvC family. Homodimer which binds Holliday junction (HJ) DNA. The HJ becomes 2-fold symmetrical on binding to RuvC with unstacked arms; it has a different conformation from HJ DNA in complex with RuvA. In the full resolvosome a probable DNA-RuvA(4)-RuvB(12)-RuvC(2) complex forms which resolves the HJ. Mg(2+) serves as cofactor.

The protein resides in the cytoplasm. The catalysed reaction is Endonucleolytic cleavage at a junction such as a reciprocal single-stranded crossover between two homologous DNA duplexes (Holliday junction).. Its function is as follows. The RuvA-RuvB-RuvC complex processes Holliday junction (HJ) DNA during genetic recombination and DNA repair. Endonuclease that resolves HJ intermediates. Cleaves cruciform DNA by making single-stranded nicks across the HJ at symmetrical positions within the homologous arms, yielding a 5'-phosphate and a 3'-hydroxyl group; requires a central core of homology in the junction. The consensus cleavage sequence is 5'-(A/T)TT(C/G)-3'. Cleavage occurs on the 3'-side of the TT dinucleotide at the point of strand exchange. HJ branch migration catalyzed by RuvA-RuvB allows RuvC to scan DNA until it finds its consensus sequence, where it cleaves and resolves the cruciform DNA. The polypeptide is Crossover junction endodeoxyribonuclease RuvC (Dichelobacter nodosus (strain VCS1703A)).